We begin with the raw amino-acid sequence, 298 residues long: MEDYLVKALCYKGSIRAYAISATETVSEAQRRHDTWSSSTAALGRTLIGALLLGATLKGDDKLTVKVQGNGPAGAIIVDSNGRGETKGYIKNPHVSLKLNATGKIDVRGAVGNEGIFTVIKDLGLKETFSGQTPIVSGEIGEDFTYFMAVSEQVPSAIGLGVLVDTDESVKAAGGFMIQVMPGADESTIDFIEQRLAEVPPISQLLENGETPEQVLYRLLGEDEVEILEKMPVQFKCDCSKEKFATALIAVGIDELNAMIDEDHGAEAVCQFCNNKYHYSEEELIELRDEAIRNTKQK.

2 disulfides stabilise this stretch: Cys237–Cys239 and Cys270–Cys273.

Belongs to the HSP33 family. In terms of processing, under oxidizing conditions two disulfide bonds are formed involving the reactive cysteines. Under reducing conditions zinc is bound to the reactive cysteines and the protein is inactive.

The protein localises to the cytoplasm. In terms of biological role, redox regulated molecular chaperone. Protects both thermally unfolding and oxidatively damaged proteins from irreversible aggregation. Plays an important role in the bacterial defense system toward oxidative stress. This chain is 33 kDa chaperonin, found in Enterococcus faecalis (strain ATCC 700802 / V583).